Here is a 475-residue protein sequence, read N- to C-terminus: MAAKSQPNIPKAKSLDGVTNDRTASQGQWGRAWEVDWFSLASVIFLLLFAPFIVYYFIMACDQYSCALTGPVVDIVTGHARLSDIWAKTPPITRKAAQLYTLWVTFQVLLYTSLPDFCHKFLPGYVGGIQEGAVTPAGVVNKYQINGLQAWLLTHLLWFANAHLLSWFSPTIIFDNWIPLLWCANILGYAVSTFAMVKGYFFPTSARDCKFTGNFFYNYMMGIEFNPRIGKWFDFKLFFNGRPGIVAWTLINLSFAAKQRELHSHVTNAMVLVNVLQAIYVIDFFWNETWYLKTIDICHDHFGWYLGWGDCVWLPYLYTLQGLYLVYHPVQLSTPHAVGVLLLGLVGYYIFRVANHQKDLFRRTDGRCLIWGRKPKVIECSYTSADGQRHHSKLLVSGFWGVARHFNYVGDLMGSLAYCLACGGGHLLPYFYIIYMAILLTHRCLRDEHRCASKYGRDWERYTAAVPYRLLPGIF.

The disordered stretch occupies residues 1-21; sequence MAAKSQPNIPKAKSLDGVTND. At serine 14 the chain carries Phosphoserine. The next 6 membrane-spanning stretches (helical) occupy residues 40 to 60, 154 to 174, 177 to 197, 266 to 286, 306 to 326, and 331 to 351; these read LASV…FIMA, THLL…TIIF, WIPL…FAMV, VTNA…DFFW, LGWG…LYLV, and QLST…YYIF. Residues lysine 358, arginine 362, leucine 395, tryptophan 400, and 407-408 contribute to the NADP(+) site; that span reads NY. A helical transmembrane segment spans residues 420-440; sequence LACGGGHLLPYFYIIYMAILL. NADP(+) is bound by residues aspartate 447, 451–455, and tyrosine 462; that span reads CASKY.

This sequence belongs to the ERG4/ERG24 family. As to quaternary structure, interacts with DHCR24; this interaction regulates DHCR7 activity. Interacts with TMEM147. As to expression, widely expressed. Most abundant in adrenal gland, liver, testis, and brain.

The protein resides in the endoplasmic reticulum membrane. The catalysed reaction is cholesterol + NADP(+) = 7-dehydrocholesterol + NADPH + H(+). It carries out the reaction 7-dehydrodesmosterol + NADPH + H(+) = desmosterol + NADP(+). It catalyses the reaction 5,6alpha-epoxy-5alpha-cholestan-3beta-ol + H2O = 5alpha-cholestane-3beta,5,6beta-triol. The enzyme catalyses 5,6beta-epoxy-5beta-cholestan-3beta-ol + H2O = 5alpha-cholestane-3beta,5,6beta-triol. The protein operates within steroid biosynthesis; cholesterol biosynthesis. With respect to regulation, 7-DHC reductase and cholesterol-5,6-epoxide hydrolase (ChEH) activities are inhibited by tamoxifen and the selective AEBS ligand (4-benzyl-phenoxy)-ethyl-N-pyrrolidine (PBPE). ChEH activity is inhibited by oleic acid. Functionally, oxidoreductase that catalyzes the last step of the cholesterol synthesis pathway, which transforms cholesta-5,7-dien-3beta-ol (7-dehydrocholesterol,7-DHC) into cholesterol by reducing the C7-C8 double bond of its sterol core. Can also metabolize cholesta-5,7,24-trien-3beta-ol (7-dehydrodemosterol, 7-DHD) to desmosterol, which is then metabolized by the Delta(24)-sterol reductase (DHCR24) to cholesterol. Modulates ferroptosis (a form of regulated cell death driven by iron-dependent lipid peroxidation) through the metabolic breakdown of the anti-ferroptotic metabolites 7-DHC and 7-DHD which, when accumulated, divert the propagation of peroxyl radical-mediated damage from phospholipid components to its sterol core, protecting plasma and mitochondrial membranes from phospholipid autoxidation. Component of the microsomal antiestrogen binding site (AEBS), a multiproteic complex at the ER membrane that consists of an association between cholestenol Delta-isomerase/EBP and DHCR7. This complex is responsible for cholesterol-5,6-epoxide hydrolase (ChEH) activity, which consists in the hydration of cholesterol-5,6-epoxides (5,6-EC) into cholestane-3beta,5alpha,6beta-triol (CT). The precise role of each component of this complex has not been described yet. The polypeptide is 7-dehydrocholesterol reductase (Homo sapiens (Human)).